The chain runs to 112 residues: Ferredoxin-2 (112 aa).

2 4Fe-4S ferredoxin-type domains span residues 2-30 (TYVVTDNCIACKYTDCVEVCPVDCFYEGE) and 31-60 (NTLVIHPDECIDCGVCEPECPADAIRPDTE). [3Fe-4S] cluster is bound by residues cysteine 9 and cysteine 17. The [4Fe-4S] cluster site is built by cysteine 21, cysteine 40, cysteine 43, and cysteine 46. Cysteine 50 is a binding site for [3Fe-4S] cluster. The span at 85–103 (DPMPDHKKYDGETGKREKY) shows a compositional bias: basic and acidic residues. The segment at 85 to 112 (DPMPDHKKYDGETGKREKYFSPNPGTGD) is disordered.

Requires [4Fe-4S] cluster as cofactor. It depends on [3Fe-4S] cluster as a cofactor.

Its function is as follows. Ferredoxins are iron-sulfur proteins that transfer electrons in a wide variety of metabolic reactions. The sequence is that of Ferredoxin-2 (fdxA) from Rhodobacter capsulatus (strain ATCC BAA-309 / NBRC 16581 / SB1003).